The primary structure comprises 823 residues: Valine--tRNA ligase (823 aa).

The short motif at 52–62 is the 'HIGH' region element; it reads PTVSGVLHMGH. Residues 549-553 carry the 'KMSKS' region motif; it reads KMSKS. Residue K552 coordinates ATP.

Belongs to the class-I aminoacyl-tRNA synthetase family. ValS type 2 subfamily. Monomer.

The protein resides in the cytoplasm. The catalysed reaction is tRNA(Val) + L-valine + ATP = L-valyl-tRNA(Val) + AMP + diphosphate. In terms of biological role, catalyzes the attachment of valine to tRNA(Val). As ValRS can inadvertently accommodate and process structurally similar amino acids such as threonine, to avoid such errors, it has a 'posttransfer' editing activity that hydrolyzes mischarged Thr-tRNA(Val) in a tRNA-dependent manner. This chain is Valine--tRNA ligase, found in Anaplasma marginale (strain St. Maries).